The following is a 144-amino-acid chain: Transcriptional regulator MraZ (144 aa).

SpoVT-AbrB domains follow at residues 5 to 47 and 76 to 119; these read EYDH…TLDE and AVEV…DRET.

This sequence belongs to the MraZ family. Forms oligomers.

It localises to the cytoplasm. Its subcellular location is the nucleoid. In Staphylococcus aureus, this protein is Transcriptional regulator MraZ.